Reading from the N-terminus, the 258-residue chain is SufE-like protein 2, chloroplastic (258 aa).

The segment at 1-32 is disordered; the sequence is MNTSSSFKALASPPLISTSRPTTKSFPNPRFT. The segment covering 15 to 32 has biased composition (polar residues); sequence LISTSRPTTKSFPNPRFT. C122 serves as the catalytic Cysteine persulfide intermediate.

Belongs to the SufE family. Highly expressed in flowers and pollen, and at low levels in roots, leaves and stems.

It is found in the plastid. It localises to the chloroplast. The protein operates within cofactor biosynthesis; iron-sulfur cluster biosynthesis. Participates in cysteine desulfurization mediated by NFS2. Can activate the cysteine desulfurase activity of NFS2 in vitro. Cysteine desulfurization mobilizes sulfur from L-cysteine to yield L-alanine and supplies the inorganic sulfur for iron-sulfur (Fe-S) cluster formation. The chain is SufE-like protein 2, chloroplastic (SUFE2) from Arabidopsis thaliana (Mouse-ear cress).